A 254-amino-acid polypeptide reads, in one-letter code: 3-deoxy-manno-octulosonate cytidylyltransferase (254 aa).

Belongs to the KdsB family.

It is found in the cytoplasm. It catalyses the reaction 3-deoxy-alpha-D-manno-oct-2-ulosonate + CTP = CMP-3-deoxy-beta-D-manno-octulosonate + diphosphate. Its pathway is nucleotide-sugar biosynthesis; CMP-3-deoxy-D-manno-octulosonate biosynthesis; CMP-3-deoxy-D-manno-octulosonate from 3-deoxy-D-manno-octulosonate and CTP: step 1/1. The protein operates within bacterial outer membrane biogenesis; lipopolysaccharide biosynthesis. Its function is as follows. Activates KDO (a required 8-carbon sugar) for incorporation into bacterial lipopolysaccharide in Gram-negative bacteria. In Pseudomonas paraeruginosa (strain DSM 24068 / PA7) (Pseudomonas aeruginosa (strain PA7)), this protein is 3-deoxy-manno-octulosonate cytidylyltransferase.